We begin with the raw amino-acid sequence, 64 residues long: Large ribosomal subunit protein bL32 (64 aa).

This sequence belongs to the bacterial ribosomal protein bL32 family.

The polypeptide is Large ribosomal subunit protein bL32 (Flavobacterium psychrophilum (strain ATCC 49511 / DSM 21280 / CIP 103535 / JIP02/86)).